A 347-amino-acid chain; its full sequence is Phenylalanine--tRNA ligase alpha subunit (347 aa).

Position 259 (glutamate 259) interacts with Mg(2+).

Belongs to the class-II aminoacyl-tRNA synthetase family. Phe-tRNA synthetase alpha subunit type 1 subfamily. In terms of assembly, tetramer of two alpha and two beta subunits. Requires Mg(2+) as cofactor.

The protein resides in the cytoplasm. It catalyses the reaction tRNA(Phe) + L-phenylalanine + ATP = L-phenylalanyl-tRNA(Phe) + AMP + diphosphate + H(+). This is Phenylalanine--tRNA ligase alpha subunit from Oenococcus oeni (strain ATCC BAA-331 / PSU-1).